We begin with the raw amino-acid sequence, 213 residues long: Holliday junction branch migration complex subunit RuvA (213 aa).

The interval 1-69 is domain I; that stretch reads MISYLKGIVA…EEIPLLYGFS (69 aa). The tract at residues 70–148 is domain II; the sequence is SPAERDLFRH…EWRKSAGFFV (79 aa). Residues 149–158 form a flexible linker region; that stretch reads ATEGPAPGIL. The segment at 158–213 is domain III; it reads LEEVQMTLFALGYTAHEVSHALHVVSEDIGLPKDAYVEDWIKQAIAHLSSSEQVSH.

The protein belongs to the RuvA family. As to quaternary structure, homotetramer. Forms an RuvA(8)-RuvB(12)-Holliday junction (HJ) complex. HJ DNA is sandwiched between 2 RuvA tetramers; dsDNA enters through RuvA and exits via RuvB. An RuvB hexamer assembles on each DNA strand where it exits the tetramer. Each RuvB hexamer is contacted by two RuvA subunits (via domain III) on 2 adjacent RuvB subunits; this complex drives branch migration. In the full resolvosome a probable DNA-RuvA(4)-RuvB(12)-RuvC(2) complex forms which resolves the HJ.

Its subcellular location is the cytoplasm. Functionally, the RuvA-RuvB-RuvC complex processes Holliday junction (HJ) DNA during genetic recombination and DNA repair, while the RuvA-RuvB complex plays an important role in the rescue of blocked DNA replication forks via replication fork reversal (RFR). RuvA specifically binds to HJ cruciform DNA, conferring on it an open structure. The RuvB hexamer acts as an ATP-dependent pump, pulling dsDNA into and through the RuvAB complex. HJ branch migration allows RuvC to scan DNA until it finds its consensus sequence, where it cleaves and resolves the cruciform DNA. The protein is Holliday junction branch migration complex subunit RuvA of Nostoc sp. (strain PCC 7120 / SAG 25.82 / UTEX 2576).